Here is a 228-residue protein sequence, read N- to C-terminus: Cell surface Cu-only superoxide dismutase 5 (228 aa).

The signal sequence occupies residues 1-15 (MKYLSIFLLATFALA). Residue Asn-53 is glycosylated (N-linked (GlcNAc...) asparagine). Residues His-75 and His-77 each coordinate Cu cation. An N-linked (GlcNAc...) asparagine glycan is attached at Asn-86. Cys-87 and Cys-162 are joined by a disulfide. His-93 lines the Cu cation pocket. The N-linked (GlcNAc...) asparagine glycan is linked to Asn-98. His-153 lines the Cu cation pocket. 5 N-linked (GlcNAc...) asparagine glycosylation sites follow: Asn-156, Asn-164, Asn-176, Asn-181, and Asn-192. Low complexity predominate over residues 176–201 (NTTMSNSSSSSSQSAVNTSSSMASTA). Positions 176 to 204 (NTTMSNSSSSSSQSAVNTSSSMASTAPQG) are disordered. A lipid anchor (GPI-anchor amidated asparagine) is attached at Asn-205. The propeptide at 206–228 (GAERAVVNGLLAAGVVGVIAALI) is removed in mature form.

It belongs to the Cu-Zn superoxide dismutase family. In terms of assembly, monomer. It depends on Cu cation as a cofactor. The GPI-anchor is attached to the protein in the endoplasmic reticulum and serves to target the protein to the cell surface. There, the glucosamine-inositol phospholipid moiety is cleaved off and the GPI-modified mannoprotein is covalently attached via its lipidless GPI glycan remnant to the 1,6-beta-glucan of the outer cell wall layer.

Its subcellular location is the secreted. The protein localises to the cell wall. It localises to the membrane. The enzyme catalyses 2 superoxide + 2 H(+) = H2O2 + O2. Its activity is regulated as follows. Secreted in a disulfide-oxidized form and apo-pools of secreted SOD5 can readily capture extracellular copper for rapid induction of enzyme activity. Its function is as follows. Superoxide dismutases serve to convert damaging superoxide radicals, a key form of ROS, to less damaging hydrogen peroxide that can be converted into water by catalase action. Degrades host-derived reactive oxygen species to escape innate immune surveillance. Involved in the occurrence of miconazole-tolerant persisters in biofilms. Persisters are cells that survive high doses of an antimicrobial agent. The unusual attributes of SOD5-like fungal proteins, including the absence of zinc and an open active site that readily captures extracellular copper, make these SODs well suited to meet challenges in zinc and copper availability at the host-pathogen interface. The polypeptide is Cell surface Cu-only superoxide dismutase 5 (SOD5) (Candida albicans (strain SC5314 / ATCC MYA-2876) (Yeast)).